The primary structure comprises 385 residues: SSTETPPSYNQLNYNENLLRFFNSKPVTAPVPVELDPPKVESSYVSSAREDARSTLSPVQGFEGSGGSGSSGNFTTGSNLHMSSVTNTSNAGTGTSGTGNSGDGGGGGAGDGPGSGAVPPVTLTESLLNKHNDEMEKFMLKNDRESRGWSGEKNKKSANDTLKMVEYSGPGPGHGHGIKRGGSHSWEGEANKPKQQLTLNAGGMPPLVDIHASSSSLSKCQTSVAGGGGGGGAGSASGTCGTGNNGAGGGGGSNAQSSTNQYTQSGLSCTQNINLWPPFSVGITTPTSVLSTHMAVAQSSFSPQHSLFPTFYYIPASIAASSPASGTSPNPRPHKHTHVHPSSEQPSTSQGAAATMPLQYMTGVMYPHPSLFYTHPAAAAATAMV.

Disordered stretches follow at residues 28–121, 169–189, and 322–351; these read TAPV…VPPV, GPGPGHGHGIKRGGSHSWEGE, and SPASGTSPNPRPHKHTHVHPSSEQPSTSQG. Residues 71-93 show a composition bias toward low complexity; it reads SGNFTTGSNLHMSSVTNTSNAGT. The span at 94–115 shows a compositional bias: gly residues; that stretch reads GTSGTGNSGDGGGGGAGDGPGS. The segment covering 340-351 has biased composition (polar residues); it reads HPSSEQPSTSQG.

Forms a heterodimer with timeless (TIM); the complex then translocates into the nucleus. Post-translationally, phosphorylated with a circadian rhythmicity, probably by the double-time protein (dbt). Phosphorylation could be implicated in the stability of per monomer and in the formation of heterodimer per-tim.

Its subcellular location is the nucleus. It is found in the cytoplasm. It localises to the perinuclear region. Essential for biological clock functions. Determines the period length of circadian and ultradian rhythms; an increase in PER dosage leads to shortened circadian rhythms and a decrease leads to lengthened circadian rhythms. Essential for the circadian rhythmicity of locomotor activity, eclosion behavior, and for the rhythmic component of the male courtship song that originates in the thoracic nervous system. The biological cycle depends on the rhythmic formation and nuclear localization of the TIM-PER complex. Light induces the degradation of TIM, which promotes elimination of PER. Nuclear activity of the heterodimer coordinatively regulates PER and TIM transcription through a negative feedback loop. Behaves as a negative element in circadian transcriptional loop. Does not appear to bind DNA, suggesting indirect transcriptional inhibition. The chain is Period circadian protein (per) from Drosophila nebulosa (Fruit fly).